The following is a 1324-amino-acid chain: Ubiquitin carboxyl-terminal hydrolase 42 (1324 aa).

2 disordered regions span residues 1–38 (MTIV…SASW) and 63–87 (YSSS…DGIA). The span at 10-25 (SSDPSAYQNQPGSSEA) shows a compositional bias: polar residues. Over residues 63–80 (YSSSSVPDKSKPSPQKDQ) the composition is skewed to low complexity. Phosphoserine is present on Ser75. One can recognise a USP domain in the interval 111-412 (AGLQNLGNTC…QAYVLFYIRS (302 aa)). The active-site Nucleophile is the Cys120. His371 functions as the Proton acceptor in the catalytic mechanism. Disordered stretches follow at residues 452-494 (IGPQ…NRAS), 536-707 (QSQP…MPAP), 722-1026 (LSNK…RHRS), 1085-1131 (RAGL…HPDR), 1149-1254 (DRFH…VKDS), and 1275-1294 (GGFP…FREK). Residues 477–489 (PSSSMSSPNGNSS) are compositionally biased toward low complexity. Phosphoserine is present on Ser483. A compositionally biased stretch (polar residues) spans 536-564 (QSQPNLHSNSLENPTKPVPSSTITNSAVQ). Positions 565 to 576 (STSNASTMSVSS) are enriched in low complexity. Positions 586–603 (ESCSQPVMNGKSKLNSSV) are enriched in polar residues. Ser754 and Ser856 each carry phosphoserine. 5 stretches are compositionally biased toward basic and acidic residues: residues 938–974 (AKEK…SKTE), 984–1013 (CPRE…ERRS), 1101–1113 (RGCE…ERHR), 1149–1158 (DRFHEHENGK), and 1165–1191 (DSVE…EEPK). Ser1181 is modified (phosphoserine). Positions 1192-1206 (AKKHKKSKKKKKSKD) are enriched in basic residues. Residues 1207–1218 (KHRDRDSRHQQD) are compositionally biased toward basic and acidic residues. Phosphoserine is present on residues Ser1219, Ser1222, and Ser1226. Basic residues predominate over residues 1231–1245 (HRHKKKKKKKKRHSR). The residue at position 1247 (Ser1247) is a Phosphoserine.

The protein belongs to the peptidase C19 family. Broadly expressed.

It carries out the reaction Thiol-dependent hydrolysis of ester, thioester, amide, peptide and isopeptide bonds formed by the C-terminal Gly of ubiquitin (a 76-residue protein attached to proteins as an intracellular targeting signal).. Its function is as follows. Deubiquitinating enzyme which may play an important role during spermatogenesis. This is Ubiquitin carboxyl-terminal hydrolase 42 (USP42) from Homo sapiens (Human).